The primary structure comprises 900 residues: Alanine--tRNA ligase (900 aa).

Residues His604, His608, Cys708, and His712 each contribute to the Zn(2+) site.

Belongs to the class-II aminoacyl-tRNA synthetase family. Requires Zn(2+) as cofactor.

It is found in the cytoplasm. It catalyses the reaction tRNA(Ala) + L-alanine + ATP = L-alanyl-tRNA(Ala) + AMP + diphosphate. Functionally, catalyzes the attachment of alanine to tRNA(Ala) in a two-step reaction: alanine is first activated by ATP to form Ala-AMP and then transferred to the acceptor end of tRNA(Ala). Also edits incorrectly charged Ser-tRNA(Ala) and Gly-tRNA(Ala) via its editing domain. The polypeptide is Alanine--tRNA ligase (Saccharolobus islandicus (strain Y.G.57.14 / Yellowstone #1) (Sulfolobus islandicus)).